A 526-amino-acid chain; its full sequence is GMP synthase [glutamine-hydrolyzing] (526 aa).

The Glutamine amidotransferase type-1 domain occupies 4–202 (KILILDFGSQ…VHDICGCDQS (199 aa)). The Nucleophile role is filled by cysteine 81. Catalysis depends on residues histidine 176 and glutamate 178. A GMPS ATP-PPase domain is found at 203–395 (WNMPDYVETA…LGLPHDMVYR (193 aa)). Residue 230 to 236 (SGGVDSS) participates in ATP binding.

In terms of assembly, homodimer.

It catalyses the reaction XMP + L-glutamine + ATP + H2O = GMP + L-glutamate + AMP + diphosphate + 2 H(+). Its pathway is purine metabolism; GMP biosynthesis; GMP from XMP (L-Gln route): step 1/1. In terms of biological role, catalyzes the synthesis of GMP from XMP. This chain is GMP synthase [glutamine-hydrolyzing], found in Methylobacillus flagellatus (strain ATCC 51484 / DSM 6875 / VKM B-1610 / KT).